A 419-amino-acid polypeptide reads, in one-letter code: Tyrosine--tRNA ligase 1 (419 aa).

Residue Tyr35 coordinates L-tyrosine. The short motif at Pro40–His49 is the 'HIGH' region element. L-tyrosine is bound by residues Tyr172 and Gln176. Positions Lys232–Thr236 match the 'KMSKS' region motif. Lys235 provides a ligand contact to ATP. An S4 RNA-binding domain is found at Gln353–Ala418.

Belongs to the class-I aminoacyl-tRNA synthetase family. TyrS type 1 subfamily. In terms of assembly, homodimer.

Its subcellular location is the cytoplasm. It carries out the reaction tRNA(Tyr) + L-tyrosine + ATP = L-tyrosyl-tRNA(Tyr) + AMP + diphosphate + H(+). In terms of biological role, catalyzes the attachment of tyrosine to tRNA(Tyr) in a two-step reaction: tyrosine is first activated by ATP to form Tyr-AMP and then transferred to the acceptor end of tRNA(Tyr). The protein is Tyrosine--tRNA ligase 1 of Vibrio parahaemolyticus serotype O3:K6 (strain RIMD 2210633).